A 510-amino-acid polypeptide reads, in one-letter code: MDPLQAVHLGPRKKRPRQLGTPVASTPYDIRFRDLVLFILEKKMGTTRRAFLMELARRKGFRVENELSDSVTHIVAENNSGSDVLEWLQLQNIKASSELELLDISWLIECMGAGKPVEMMGRHQLVVNRNSSPSPVPGSQNVPAPAVKKISQYACQRRTTLNNYNQLFTDALDILAENDELRENEGSCLAFMRASSVLKSLPFPITSMKDTEGIPCLGDKVKSIIEGIIEDGESSEAKAVLNDERYKSFKLFTSVFGVGLKTAEKWFRMGFRTLSKIQSDKSLRFTQMQKAGFLYYEDLVSCVNRPEAEAVSMLVKEAVVTFLPDALVTMTGGFRRGKMTGHDVDFLITSPEATEDEEQQLLHKVTDFWKQQGLLLYCDILESTFEKFKQPSRKVDALDHFQKCFLILKLDHGRVHSEKSGQQEGKGWKAIRVDLVMCPYDRRAFALLGWTGSRQFERDLRRYATHERKMMLDNHALYDRTKRVFLEAESEEEIFAHLGLDYIEPWERNA.

Residues 1-22 are disordered; that stretch reads MDPLQAVHLGPRKKRPRQLGTP. The short motif at 11-17 is the Nuclear localization signal element; sequence PRKKRPR. In terms of domain architecture, BRCT spans 27-124; sequence PYDIRFRDLV…KPVEMMGRHQ (98 aa). Residue Ser-134 is modified to Phosphoserine. Residues 151–510 are mediates interaction with DNTTIP2; it reads SQYACQRRTT…DYIEPWERNA (360 aa). The interval 258-262 is involved in DNA binding; sequence VGLKT. Residues 333–338 and 342–345 contribute to the a 2'-deoxyribonucleoside 5'-triphosphate site; these read GFRRGK and HDVD. Asp-343, Asp-345, and Asp-434 together coordinate Mg(2+). An a 2'-deoxyribonucleoside 5'-triphosphate-binding site is contributed by 449–450; it reads GW.

This sequence belongs to the DNA polymerase type-X family. As to quaternary structure, interacts with PRP19 and DNTTIP1. Forms a ternary complex with DNTTIP2 and core histone. Released from this complex by PCNA. Interacts with TRERF1. It depends on Mg(2+) as a cofactor. Isoform TDT-L: Expressed in the thymus, and, at lower levels, in the bone marrow. Detected in both cycling and noncycling pro-B and pre-B cells (at protein level). Isoform TDT-S: Expressed in both cycling and noncycling pro-B, but not pre-B, cells (at protein level). Not detected in mature peripheral or germinal center B cells.

The protein resides in the nucleus. Its subcellular location is the cytoplasm. It carries out the reaction DNA(n) + a 2'-deoxyribonucleoside 5'-triphosphate = DNA(n+1) + diphosphate. Transferase that catalyzes the nontemplated addition of nucleoside triphosphate to coding ends during V(D)J recombination (N addition). Involved in the generation of diversity in the antigen-binding region of immunoglobulin heavy and light chains and T-cell receptors during B- and T-cell development. Does not act on double-stranded DNA with blunt ends. Functionally, 3'-to-5' DNA exonuclease. Involved in the generation of diversity in the antigen-binding region of immunoglobulin heavy and light chains and T-cell receptors during B- and T-cell development. Acts on single-stranded and double-stranded DNA with 3' or 5' extensions, but not on double-stranded DNA with blunt ends. Attenuates not only isoform TDT-S-catalyzed N addition, but also P (palindromic) addition in coding joins. Lacks terminal transferase activity. The protein is DNA nucleotidylexotransferase (Dntt) of Mus musculus (Mouse).